We begin with the raw amino-acid sequence, 114 residues long: uncharacterized protein (114 aa).

Residues 2 to 97 (ESEPLYKLKA…VARKVLARVL (96 aa)) form the HTH arsR-type domain. Residues 37-60 (GELLSSDVGLESSNLSQQLGVLRR) constitute a DNA-binding region (H-T-H motif).

This is an uncharacterized protein from Mycobacterium tuberculosis (strain CDC 1551 / Oshkosh).